A 129-amino-acid polypeptide reads, in one-letter code: Small ribosomal subunit protein uS11 (129 aa).

Belongs to the universal ribosomal protein uS11 family. As to quaternary structure, part of the 30S ribosomal subunit. Interacts with proteins S7 and S18. Binds to IF-3.

In terms of biological role, located on the platform of the 30S subunit, it bridges several disparate RNA helices of the 16S rRNA. Forms part of the Shine-Dalgarno cleft in the 70S ribosome. In Haemophilus influenzae (strain 86-028NP), this protein is Small ribosomal subunit protein uS11.